A 1453-amino-acid polypeptide reads, in one-letter code: Scavenger receptor cysteine-rich type 1 protein M160 (1453 aa).

An N-terminal signal peptide occupies residues 1-40; it reads MMLPQNSWHIDFGRCCCHQNLFSAVVTCILLLNSCFLISS. Residues 41-1359 are Extracellular-facing; the sequence is FNGTDLELRL…LKSLNASSGH (1319 aa). N-linked (GlcNAc...) asparagine glycans are attached at residues Asn42, Asn78, Asn120, and Asn161. 9 SRCR domains span residues 48–148, 155–255, 262–362, 369–469, 476–576, 583–683, 690–790, 795–895, and 900–1000; these read LRLV…VNCY, LRLV…LTCY, LRLV…VICS, LRLA…VICS, LRLV…VTCS, LRLV…LICS, PRLV…VVCS, and VRLV…VICT. 3 cysteine pairs are disulfide-bonded: Cys73/Cys137, Cys86/Cys147, and Cys117/Cys127. Intrachain disulfides connect Cys180–Cys244, Cys193–Cys254, Cys224–Cys234, Cys287–Cys351, Cys300–Cys361, and Cys331–Cys341. N-linked (GlcNAc...) asparagine glycans are attached at residues Asn334, Asn377, Asn441, Asn548, and Asn637. 18 cysteine pairs are disulfide-bonded: Cys394–Cys458, Cys407–Cys468, Cys438–Cys448, Cys501–Cys565, Cys514–Cys575, Cys545–Cys555, Cys608–Cys672, Cys621–Cys682, Cys652–Cys662, Cys715–Cys779, Cys728–Cys789, Cys759–Cys769, Cys820–Cys884, Cys833–Cys894, Cys864–Cys874, Cys925–Cys989, Cys938–Cys999, and Cys969–Cys979. N-linked (GlcNAc...) asparagine glycans are attached at residues Asn972, Asn1013, Asn1084, and Asn1104. SRCR domains follow at residues 1036–1136, 1141–1243, and 1246–1346; these read LRLV…VICS, LRLY…ITCE, and IRVR…VRCS. 3 cysteine pairs are disulfide-bonded: Cys1061-Cys1125, Cys1074-Cys1135, and Cys1105-Cys1115. Asn1161 and Asn1171 each carry an N-linked (GlcNAc...) asparagine glycan. 5 disulfide bridges follow: Cys1181-Cys1242, Cys1212-Cys1222, Cys1271-Cys1335, Cys1284-Cys1345, and Cys1315-Cys1325. Residues Asn1318 and Asn1354 are each glycosylated (N-linked (GlcNAc...) asparagine). Residues 1360 to 1380 form a helical membrane-spanning segment; that stretch reads LALILSSIFGLLLLVLFILFL. Topologically, residues 1381–1453 are cytoplasmic; sequence TWCRVQKQKH…GVLPASEATK (73 aa). Residues 1418 to 1435 are compositionally biased toward basic and acidic residues; the sequence is EDPHGTRTSDDTPNHGCE. Residues 1418–1453 form a disordered region; that stretch reads EDPHGTRTSDDTPNHGCEDASDTSLLGVLPASEATK.

In terms of tissue distribution, isoform 1 is highly expressed in the spleen, lymph nodes, thymus, and fetal liver and weakly expressed in bone marrow and no expression was found in peripheral blood leukocytes. Isoform 1 expression is restricted to the monocyte and macrophage cell lines. Isoform 2 is only expressed in spleen.

It is found in the cell membrane. It localises to the secreted. This is Scavenger receptor cysteine-rich type 1 protein M160 (CD163L1) from Homo sapiens (Human).